Reading from the N-terminus, the 384-residue chain is DNA repair protein RAD51 homolog 2 (384 aa).

Residues 1-75 form an interaction with RAD51C region; that stretch reads MGSKKLKRVG…TAYGIKAQRS (75 aa). ATP is bound at residue 108–115; sequence GPPGCGKT.

This sequence belongs to the RecA family. RAD51 subfamily. As to quaternary structure, part of the BCDX2 complex consisting of RAD51B, RAD51C, RAD51D and XRCC2; the complex has a ring-like structure arranged into a flat disc around a central channel. The BCDX2 subcomplex RAD51B:RAD51C interacts with RAD51. Interacts with SWSAP1; involved in homologous recombination repair. Interacts with HELQ. Post-translationally, phosphorylated on tyrosine residues by BCR-ABL. As to expression, expressed in a wide range of tissues.

The protein localises to the nucleus. Functionally, involved in the homologous recombination repair (HRR) pathway of double-stranded DNA breaks arising during DNA replication or induced by DNA-damaging agents. May promote the assembly of presynaptic RAD51 nucleoprotein filaments. Binds single-stranded DNA and double-stranded DNA and has DNA-dependent ATPase activity. Part of the RAD51 paralog protein complex BCDX2 which acts in the BRCA1-BRCA2-dependent HR pathway. Upon DNA damage, BCDX2 acts downstream of BRCA2 recruitment and upstream of RAD51 recruitment. BCDX2 binds predominantly to the intersection of the four duplex arms of the Holliday junction and to junction of replication forks. The BCDX2 complex was originally reported to bind single-stranded DNA, single-stranded gaps in duplex DNA and specifically to nicks in duplex DNA. The BCDX2 subcomplex RAD51B:RAD51C exhibits single-stranded DNA-dependent ATPase activity suggesting an involvement in early stages of the HR pathway. The protein is DNA repair protein RAD51 homolog 2 (RAD51B) of Homo sapiens (Human).